The following is a 445-amino-acid chain: UPF0210 protein SPH_0352 (445 aa).

The protein belongs to the UPF0210 family. Homodimer.

In Streptococcus pneumoniae (strain Hungary19A-6), this protein is UPF0210 protein SPH_0352.